A 447-amino-acid chain; its full sequence is Serine/threonine-protein phosphatase 2A 55 kDa regulatory subunit B gamma isoform (447 aa).

WD repeat units lie at residues 22–61, 87–128, 171–209, 220–260, 279–317, 334–375, and 410–446; these read TEAD…KNAP, EIEE…KRPE, GHTY…RSFN, DLTE…LCDK, EIIS…RPIE, ESDC…DVTL, and DFTK…NSDM.

This sequence belongs to the phosphatase 2A regulatory subunit B family. As to quaternary structure, PP2A consists of a common heterodimeric core enzyme, composed of a 36 kDa catalytic subunit (subunit C) and a 65 kDa constant regulatory subunit (PR65 or subunit A), that associates with a variety of regulatory subunits. Proteins that associate with the core dimer include three families of regulatory subunits B (the R2/B/PR55/B55, R3/B''/PR72/PR130/PR59 and R5/B'/B56 families), the 48 kDa variable regulatory subunit, viral proteins, and cell signaling molecules. Interacts with IER5.

Its function is as follows. The B regulatory subunit might modulate substrate selectivity and catalytic activity, and might also direct the localization of the catalytic enzyme to a particular subcellular compartment. The chain is Serine/threonine-protein phosphatase 2A 55 kDa regulatory subunit B gamma isoform (Ppp2r2c) from Mus musculus (Mouse).